A 63-amino-acid chain; its full sequence is Large ribosomal subunit protein uL29 (63 aa).

Belongs to the universal ribosomal protein uL29 family.

The chain is Large ribosomal subunit protein uL29 from Shewanella baltica (strain OS223).